A 305-amino-acid polypeptide reads, in one-letter code: MPLLKLWAGSLVMLAAVSLPLQAASPVKVGSKIDTEGALLGNIILQVLESHGVPTVNKVQLGTTPVVRGAITSGELDIYPEYTGNGAFFFKDENDAAWKNAQQGYEKVKKLDSEHNKLIWLTPAPANNTWTIAVRQDVAEKNKLTSLADLSRYLQEGGTFKLAASAEFIERADALPAFEKAYGFKLGQDQLLSLAGGDTAVTIKAAAQQTSGVNAAMAYGTDGPVAALGLQTLSDPQGVQPIYAPAPVVRESVLREYPQMAQWLQPVFASLDAKTLQQLNASIAVEGLDAKKVAADYLKQKGWTK.

Positions 1–23 (MPLLKLWAGSLVMLAAVSLPLQA) are cleaved as a signal peptide.

The protein belongs to the OsmX family. In terms of assembly, the complex is composed of two ATP-binding proteins (YehX), two transmembrane proteins (YehW and YehY) and a solute-binding protein (YehZ).

The protein localises to the periplasm. Functionally, part of an ABC transporter complex involved in low-affinity glycine betaine uptake. Binds glycine betaine with low affinity. The chain is Glycine betaine-binding protein YehZ (yehZ) from Escherichia coli (strain K12).